The following is a 622-amino-acid chain: MSSEHKRSLPAVTLAAIGVVYGDIGTSPLYTLRECLSGQFGFGVEPHSVFGFLSLIFWLLVLVVSLKYLTYVMRADNAGEGGILTLMSLAGRNTSDRMTSVLVIMGLIGGSFFYGEVVITPAISVMSAMEGLEIAAPAMDSYIVPLSIVVLTLLFIIQKHGTGSVGKLFAPVMLIWFLTLGVLGVRGIIANPEVLQALNPMYAVRFFIEYKAVSFFALGAVVLAITGVEALYADMGHFGKFPIRLAWFTVVLPSLVLNYFGQGALLLKNPEAIKNPFFLLAPDWALIPLMVLATLATVIASQAVISGVFSLTRQAVRLGYLPPMRIVHTSDMESGQIYIPAINWMLYIAVVIVIVSFEHSSNLAAAYGIAVTGTMVITSILFCTVAVKNWLWNRYLAWVLLVGLLIIDVPMFLANVVKILSGGWLPLALGMVMFIIMTTWKSERFRLLRRLHEHGNSLDAMIASLEKSPPTRVPGTAVYFSRATRVIPFALLHNLKHNKILHERVVLLTMRTEDAPYVLNARRVTVEQLSPTFWRVIANYGWRETPDVEEVFQRCWQEGLTCQMMETSFFMSNESLIIGERPWYLRLRGKLFMMLSRNALRAADQFEIPPNRLIELGIQVEI.

12 helical membrane passes run 9–29 (LPAVTLAAIGVVYGDIGTSPL), 49–69 (VFGFLSLIFWLLVLVVSLKYL), 101–121 (VLVIMGLIGGSFFYGEVVITP), 137–157 (PAMDSYIVPLSIVVLTLLFII), 165–185 (VGKLFAPVMLIWFLTLGVLGV), 212–232 (AVSFFALGAVVLAITGVEALY), 247–267 (WFTVVLPSLVLNYFGQGALLL), 276–296 (PFFLLAPDWALIPLMVLATLA), 337–357 (IYIPAINWMLYIAVVIVIVSF), 363–383 (LAAAYGIAVTGTMVITSILFC), 397–417 (AWVLLVGLLIIDVPMFLANVV), and 419–439 (ILSGGWLPLALGMVMFIIMTT).

Belongs to the HAK/KUP transporter (TC 2.A.72) family.

The protein resides in the cell inner membrane. It carries out the reaction K(+)(in) + H(+)(in) = K(+)(out) + H(+)(out). Its function is as follows. Responsible for the low-affinity transport of potassium into the cell. Likely operates as a K(+):H(+) symporter. The protein is Low affinity potassium transport system protein Kup of Pectobacterium atrosepticum (strain SCRI 1043 / ATCC BAA-672) (Erwinia carotovora subsp. atroseptica).